We begin with the raw amino-acid sequence, 105 residues long: Urease subunit beta (105 aa).

It belongs to the urease beta subunit family. Heterotrimer of UreA (gamma), UreB (beta) and UreC (alpha) subunits. Three heterotrimers associate to form the active enzyme.

The protein localises to the cytoplasm. It catalyses the reaction urea + 2 H2O + H(+) = hydrogencarbonate + 2 NH4(+). Its pathway is nitrogen metabolism; urea degradation; CO(2) and NH(3) from urea (urease route): step 1/1. This is Urease subunit beta from Marinomonas sp. (strain MWYL1).